Reading from the N-terminus, the 448-residue chain is Adenylosuccinate synthetase (448 aa).

Residues 22 to 28 (GDEGKGK) and 50 to 52 (GHT) contribute to the GTP site. The Proton acceptor role is filled by D23. Residues D23 and G50 each contribute to the Mg(2+) site. Residues 23–26 (DEGK), 48–51 (NAGH), T139, R153, Q234, T249, and R321 each bind IMP. The active-site Proton donor is the H51. 317-323 (SVTGRPR) is a binding site for substrate. Residues R323, 349–351 (KLD), and 431–433 (STG) contribute to the GTP site.

Belongs to the adenylosuccinate synthetase family. In terms of assembly, homodimer. It depends on Mg(2+) as a cofactor.

It localises to the cytoplasm. The enzyme catalyses IMP + L-aspartate + GTP = N(6)-(1,2-dicarboxyethyl)-AMP + GDP + phosphate + 2 H(+). It participates in purine metabolism; AMP biosynthesis via de novo pathway; AMP from IMP: step 1/2. Plays an important role in the de novo pathway of purine nucleotide biosynthesis. Catalyzes the first committed step in the biosynthesis of AMP from IMP. The polypeptide is Adenylosuccinate synthetase (Burkholderia mallei (strain NCTC 10247)).